We begin with the raw amino-acid sequence, 2145 residues long: Adenylate cyclase (2145 aa).

Disordered regions lie at residues 1–115, 127–236, 266–307, and 329–547; these read MPRN…RMSD, DPAG…SGAR, GKEH…PVPK, and VRDI…GPTD. 3 stretches are compositionally biased toward low complexity: residues 7–23, 35–68, and 89–107; these read SSRF…SARS, PSAS…APSR, and SPTS…SSNS. Polar residues-rich tracts occupy residues 134 to 148 and 159 to 205; these read SRTQ…SLSQ and PASS…TESP. Residues 217 to 234 are compositionally biased toward low complexity; that stretch reads SIASITTTASSQGSRASG. Positions 269 to 281 are enriched in basic residues; that stretch reads HRSHSYSHARPHR. Polar residues predominate over residues 343 to 357; it reads NDSSQQNNPPKTSGS. Basic and acidic residues predominate over residues 377–403; it reads KSNEDPRSLRPTVSREDSTISVPKDRN. Residues 404–441 show a composition bias toward polar residues; sequence GSSTMYGTRSRAQSPAPSTTGSYWGHKSGSTDGQTSPG. 2 stretches are compositionally biased toward basic and acidic residues: residues 454 to 466 and 495 to 511; these read RLKE…DLKK and ADGK…RPDL. The Ras-associating domain maps to 637-727; it reads HNYCIRVFRA…IEDIGREDNS (91 aa). LRR repeat units lie at residues 779 to 800, 803 to 824, 826 to 847, 850 to 871, 873 to 894, 896 to 917, 919 to 941, 943 to 964, 965 to 986, 987 to 1006, 1007 to 1028, 1030 to 1051, 1053 to 1074, 1076 to 1097, and 1099 to 1120; these read EIIS…FISV, NLRD…FGYA, RLTM…ALHN, GLLK…FEAF, VLRT…LAKL, NLVD…VGQM, SLER…FKNL, SLRE…SQLP, KLEI…FERV, RSIK…APVP, TLKA…FHNM, NLER…IGNL, RLEY…IGCL, ELKR…LWWA, and KLDY…ASRA. The segment at 1114 to 1226 is disordered; it reads PKPASRAPHP…SSRKDSSHTQ (113 aa). 2 stretches are compositionally biased toward low complexity: residues 1160–1179 and 1201–1217; these read RPSQ…VPGG and SRST…PTAS. LRR repeat units follow at residues 1235–1255, 1259–1280, 1283–1304, 1307–1328, 1330–1352, and 1359–1380; these read SLRY…DQLC, NLRV…SIKS, QLVE…DLEE, MLQT…ISRA, KLTV…PYDW, and NLRY…SVPT. The PPM-type phosphatase domain occupies 1432–1709; the sequence is PYGMADTLGS…NKMTVQMLGV (278 aa). Residues 1718–1760 are disordered; the sequence is RSRQHKGQSMPVYASLQDDGGSSTGMRRARKARDGPLDSTLGR. A Guanylate cyclase domain is found at 1773–1910; the sequence is AIVFTDIKNS…PMVNKASRIS (138 aa). Aspartate 1778 and aspartate 1821 together coordinate Mg(2+).

Belongs to the adenylyl cyclase class-3 family. Mg(2+) is required as a cofactor.

The catalysed reaction is ATP = 3',5'-cyclic AMP + diphosphate. Plays essential roles in regulation of cellular metabolism by catalyzing the synthesis of a second messenger, cAMP. The sequence is that of Adenylate cyclase from Podospora anserina (Pleurage anserina).